The following is a 239-amino-acid chain: Uridylate kinase (239 aa).

An ATP-binding site is contributed by 10–13 (KLSG). Positions 18–23 (GEQGYG) are involved in allosteric activation by GTP. Residue glycine 52 coordinates UMP. Residues glycine 53 and arginine 57 each contribute to the ATP site. UMP is bound by residues aspartate 72 and 133-140 (TGNPYFST). ATP contacts are provided by asparagine 161, tyrosine 167, and glutamate 170.

The protein belongs to the UMP kinase family. Homohexamer.

The protein localises to the cytoplasm. It carries out the reaction UMP + ATP = UDP + ADP. The protein operates within pyrimidine metabolism; CTP biosynthesis via de novo pathway; UDP from UMP (UMPK route): step 1/1. Its activity is regulated as follows. Allosterically activated by GTP. Inhibited by UTP. In terms of biological role, catalyzes the reversible phosphorylation of UMP to UDP. This is Uridylate kinase from Halalkalibacterium halodurans (strain ATCC BAA-125 / DSM 18197 / FERM 7344 / JCM 9153 / C-125) (Bacillus halodurans).